We begin with the raw amino-acid sequence, 355 residues long: Chorismate synthase (355 aa).

An NADP(+)-binding site is contributed by arginine 46. FMN-binding positions include 123-125 (RAS), 233-234 (NG), glycine 273, 288-292 (KPTPS), and arginine 314.

This sequence belongs to the chorismate synthase family. In terms of assembly, homotetramer. It depends on FMNH2 as a cofactor.

It catalyses the reaction 5-O-(1-carboxyvinyl)-3-phosphoshikimate = chorismate + phosphate. Its pathway is metabolic intermediate biosynthesis; chorismate biosynthesis; chorismate from D-erythrose 4-phosphate and phosphoenolpyruvate: step 7/7. Functionally, catalyzes the anti-1,4-elimination of the C-3 phosphate and the C-6 proR hydrogen from 5-enolpyruvylshikimate-3-phosphate (EPSP) to yield chorismate, which is the branch point compound that serves as the starting substrate for the three terminal pathways of aromatic amino acid biosynthesis. This reaction introduces a second double bond into the aromatic ring system. The sequence is that of Chorismate synthase from Campylobacter concisus (strain 13826).